Consider the following 380-residue polypeptide: MGSSCSRSHSLSEAETTKNAKSADIDRRILQETKAEQHIHKLLLLGAGESGKSTIFKQIKLLFQTGFDEAELRSYTSVIHANVYQTIKILYEGAKELSQVESDSSKYVISPDNQEIGEKLSDIDGRLDYPLLNKELVLDVKRLWQDPAIQETYLRGSILQLPDCAQYFMENLDRLAEAGYVPTKEDVLYARVRTNGVVQIQFSPVGENKRGGEVYRLYDVGGQRNERRKWIHLFEGVNAVIFCAAISEYDQMLFEDETKNRMMETKELFDWVLKQRCFEKTSFILFLNKFDIFEKKIQKVPLSVCEWFKDYQPIAPGKQEVEHAYEFVKKKFEELYFQSSKPDRVDRVFKIYRTTALDQKLVKKTFKLIDESMRRSREGT.

The tract at residues 1 to 25 (MGSSCSRSHSLSEAETTKNAKSADI) is disordered. Residue G2 is the site of N-myristoyl glycine attachment. C5 is lipidated: S-palmitoyl cysteine. Residues 10–25 (SLSEAETTKNAKSADI) are compositionally biased toward basic and acidic residues. Residues 38 to 380 (HIHKLLLLGA…ESMRRSREGT (343 aa)) enclose the G-alpha domain. A G1 motif region spans residues 41–54 (KLLLLGAGESGKST). E49, S50, G51, K52, S53, T54, D163, L188, Y189, T194, G222, N288, K289, D291, and A356 together coordinate GTP. Residue S53 participates in Mg(2+) binding. The G2 motif stretch occupies residues 186–194 (DVLYARVRT). T194 is a binding site for Mg(2+). Residues 215-224 (YRLYDVGGQR) are G3 motif. Residues 284 to 291 (ILFLNKFD) form a G4 motif region. Residues 354–359 (TTALDQ) are G5 motif.

The protein belongs to the G-alpha family. G proteins are composed of 3 units; alpha, beta and gamma. The alpha chain contains the guanine nucleotide binding site. Interacts with COLD1. Mg(2+) serves as cofactor.

Its subcellular location is the cell membrane. In terms of biological role, guanine nucleotide-binding proteins (G proteins) are involved as modulators or transducers in various transmembrane signaling systems. May function in a signal transduction pathway required for normal growth and development of internodes, leaves, panicles and seeds. Involved in gibberellin signal transduction. Involved in R gene-mediated disease resistance. Functions upstream of the small GTPase RAC1 in the early steps of signaling. Involved in brassinosteroid response. May not be a signaling molecule in BRI1-mediated perception or transduction. In Oryza sativa subsp. indica (Rice), this protein is Guanine nucleotide-binding protein alpha-1 subunit (GPA1).